A 550-amino-acid chain; its full sequence is Zinc finger protein 382 (550 aa).

A mediates interaction with TRIM28 region spans residues 1–105 (MPLQGSVSFK…RHSRPLIFIN (105 aa)). Represses transcription stretches follow at residues 5–46 (GSVS…FVSV) and 70–211 (IFPS…PEQP). The KRAB domain maps to 7 to 78 (VSFKDVTVDF…RIFPSYSYLE (72 aa)). The C2H2-type 1; degenerate zinc finger occupies 212–234 (FDHNECEKSFLMKGMLFTHTRAH). C2H2-type zinc fingers lie at residues 296 to 318 (FHCPYCGNNFRRKSYLIEHQRIH), 324 to 346 (YVCNQCGKAFRQKTALTLHEKTH), 352 to 374 (FICIDCGKSFRQKATLTRHHKTH), 380 to 402 (YECPQCGSAFRKKSYLIDHQRTH), 408 to 430 (YQCNECGKAFIQKTTLTVHQRTH), 436 to 458 (YICNECGKSFCQKTTLTLHQRIH), 464 to 486 (YICNECGKSFRQKAILTVHHRIH), 492 to 514 (NGCPQCGKAFSRKSNLIRHQKTH), and 520 to 542 (YECKQCGKFFSCKSNLIVHQKTH). The required for transcriptional repression activity; probably mediates sequence-specific DNA-binding stretch occupies residues 296–550 (FHCPYCGNNF…THKVETTGIQ (255 aa)).

The protein belongs to the krueppel C2H2-type zinc-finger protein family. In terms of assembly, interacts with TRIM28; enhances the transcriptional repressor activity. Specifically expressed in heart with a weaker expression also detected in skeletal muscle.

The protein localises to the nucleus. Functions as a sequence-specific transcriptional repressor. The sequence is that of Zinc finger protein 382 (ZNF382) from Homo sapiens (Human).